We begin with the raw amino-acid sequence, 404 residues long: Sodium/glutamate symporter (404 aa).

Helical transmembrane passes span 5–25 (FSTY…YFLV), 33–53 (TFNI…LLIW), 69–89 (TTMM…SRLI), 95–115 (LVVF…IGIA), 161–181 (IAIA…GPVA), 219–239 (SLIE…YLDV), 245–265 (ALQL…RNIL), 277–297 (AIDV…LMSL), 307–327 (IDVL…AIFI), 338–358 (AVVL…TAIA), and 373–393 (AFLI…AALL).

The protein belongs to the glutamate:Na(+) symporter (ESS) (TC 2.A.27) family.

It is found in the cell inner membrane. Catalyzes the sodium-dependent transport of glutamate. The protein is Sodium/glutamate symporter of Haemophilus influenzae (strain ATCC 51907 / DSM 11121 / KW20 / Rd).